The sequence spans 795 residues: METALAKTPQKRQVMFLAILLLLWEAGSEAVRYSIPEETESGYSVANLAKDLGLGVGELATRGARMHYKGNKELLQLDIKTGNLLLYEKLDREVMCGATEPCILHFQLLLENPVQFFQTDLQLTDINDHAPEFPEKEMLLKIPESTQPGTVFPLKIAQDFDIGSNTVQNYTISPNSHFHVATHNRGDGRKYPELVLDKALDREERPELSLTLTALDGGAPPRSGTTTIRIVVLDNNDNAPEFLQSFYEVQVPENSPLNSLVVVVSARDLDAGAYGSVAYALFQGDEVTQPFVIDEKTAEIRLKRALDFEATPYYNVEIVATDGGGLSGKCTVAIEVVDVNDNAPELTMSTLSSPTPENAPETVVAVFSVSDPDSGDNGRMICSIQNDLPFLLKPTLKNFYTLVTQRTLDRESQAEYNITITVTDMGTPRLKTEHNITVLVSDVNDNAPAFTQTSYTLFVRENNSPALHIGSVSATDRDSGTNAQVTYSLLPPQNPHLRLASLVSINADNGHLFALRSLDYEALQAFEFRVGATDRGSPALSSEALVRVLVLDANDNSPFVLYPLQNGSAPCTELVPRAAEPGYLVTKVVAVDGDSGQNAWLSYQLLKATEPGLFSMWAHNGEVRTARLLSERDAAKHRLVVLVKDNGEPPRSATATLHVLLVDGFSQPYLPLPEAAPAQAQADSLTVYLVVALASVSSLFLFSVLLFVAVRLCRRSRAAPVGRCSVPEGPFPGHLVDVSGTGTLSQSYHYEVCLTGDSGAGEFKFLKPIIPNLLPQGAGEEIGKTAAFRNSFGLN.

Residues 1-30 form the signal peptide; sequence METALAKTPQKRQVMFLAILLLLWEAGSEA. The Extracellular segment spans residues 31–689; that stretch reads VRYSIPEETE…AQADSLTVYL (659 aa). Cadherin domains are found at residues 35–133, 138–242, 247–346, 351–450, and 455–560; these read IPEE…APEF, MLLK…APEF, YEVQ…APEL, LSSP…APAF, and YTLF…SPFV. N-linked (GlcNAc...) asparagine glycosylation occurs at Asn-169. Lys-296 carries the N6-acetyllysine modification. N-linked (GlcNAc...) asparagine glycosylation is found at Asn-417 and Asn-435. Residue Asn-566 is glycosylated (N-linked (GlcNAc...) asparagine). Residues 567-670 form the Cadherin 6 domain; that stretch reads GSAPCTELVP…LVDGFSQPYL (104 aa). The helical transmembrane segment at 690 to 710 threads the bilayer; the sequence is VVALASVSSLFLFSVLLFVAV. Residues 711-795 are Cytoplasmic-facing; that stretch reads RLCRRSRAAP…AAFRNSFGLN (85 aa).

The protein localises to the cell membrane. Potential calcium-dependent cell-adhesion protein. May be involved in the establishment and maintenance of specific neuronal connections in the brain. This is Protocadherin beta-5 (PCDHB5) from Homo sapiens (Human).